The following is a 318-amino-acid chain: NADH-ubiquinone oxidoreductase chain 1 (318 aa).

The next 8 helical transmembrane spans lie at 2-22, 70-90, 100-120, 140-160, 172-192, 217-237, 253-273, and 294-314; these read FLVN…FLTL, MFIM…TPLP, LGVL…LWSG, ISYE…SGSF, LWLI…TLAE, GGSF…MNAI, EFYT…FLWI, and LPLT…TASI.

The protein belongs to the complex I subunit 1 family. As to quaternary structure, core subunit of respiratory chain NADH dehydrogenase (Complex I) which is composed of 45 different subunits.

It is found in the mitochondrion inner membrane. The enzyme catalyses a ubiquinone + NADH + 5 H(+)(in) = a ubiquinol + NAD(+) + 4 H(+)(out). Its function is as follows. Core subunit of the mitochondrial membrane respiratory chain NADH dehydrogenase (Complex I) which catalyzes electron transfer from NADH through the respiratory chain, using ubiquinone as an electron acceptor. Essential for the catalytic activity and assembly of complex I. The sequence is that of NADH-ubiquinone oxidoreductase chain 1 (MT-ND1) from Emballonura alecto (Philippine sheath-tailed bat).